The primary structure comprises 211 residues: Pyridoxine/pyridoxamine 5'-phosphate oxidase (211 aa).

Residues 7 to 10 (RREY) and Lys-65 each bind substrate. Residues 60-65 (RTVLLK), 75-76 (YT), Arg-81, Lys-82, and Gln-104 contribute to the FMN site. Substrate is bound by residues Tyr-122, Arg-126, and Ser-130. FMN contacts are provided by residues 139–140 (QS) and Trp-184. 190–192 (RLH) provides a ligand contact to substrate. Arg-194 is an FMN binding site.

It belongs to the pyridoxamine 5'-phosphate oxidase family. In terms of assembly, homodimer. Requires FMN as cofactor.

It carries out the reaction pyridoxamine 5'-phosphate + O2 + H2O = pyridoxal 5'-phosphate + H2O2 + NH4(+). It catalyses the reaction pyridoxine 5'-phosphate + O2 = pyridoxal 5'-phosphate + H2O2. Its pathway is cofactor metabolism; pyridoxal 5'-phosphate salvage; pyridoxal 5'-phosphate from pyridoxamine 5'-phosphate: step 1/1. It functions in the pathway cofactor metabolism; pyridoxal 5'-phosphate salvage; pyridoxal 5'-phosphate from pyridoxine 5'-phosphate: step 1/1. In terms of biological role, catalyzes the oxidation of either pyridoxine 5'-phosphate (PNP) or pyridoxamine 5'-phosphate (PMP) into pyridoxal 5'-phosphate (PLP). This is Pyridoxine/pyridoxamine 5'-phosphate oxidase from Aeromonas hydrophila subsp. hydrophila (strain ATCC 7966 / DSM 30187 / BCRC 13018 / CCUG 14551 / JCM 1027 / KCTC 2358 / NCIMB 9240 / NCTC 8049).